Here is a 244-residue protein sequence, read N- to C-terminus: 5'-deoxynucleotidase (244 aa).

It catalyses the reaction a 2'-deoxyribonucleoside 5'-phosphate + H2O = a 2'-deoxyribonucleoside + phosphate. In terms of biological role, following host DNA degradation, is responsible for the degradation of 5'-dNMP's to deoxynucleosides that can be further excreted. Active on deoxynucleoside 5'-monophosphates but not active as a phosphatase on ribonucleotides, deoxynucleoside 5'-triphosphates, deoxynucleoside 3'-monophosphates, or deoxyoligonucleotides. The polypeptide is 5'-deoxynucleotidase (dmp) (Escherichia coli (Enterobacteria phage T5)).